The primary structure comprises 283 residues: 1D-myo-inositol 2-acetamido-2-deoxy-alpha-D-glucopyranoside deacetylase (283 aa).

Residues His7, Asp10, and His148 each contribute to the Zn(2+) site.

It belongs to the MshB deacetylase family. Zn(2+) serves as cofactor.

The catalysed reaction is 1D-myo-inositol 2-acetamido-2-deoxy-alpha-D-glucopyranoside + H2O = 1D-myo-inositol 2-amino-2-deoxy-alpha-D-glucopyranoside + acetate. Catalyzes the deacetylation of 1D-myo-inositol 2-acetamido-2-deoxy-alpha-D-glucopyranoside (GlcNAc-Ins) in the mycothiol biosynthesis pathway. This is 1D-myo-inositol 2-acetamido-2-deoxy-alpha-D-glucopyranoside deacetylase from Gordonia bronchialis (strain ATCC 25592 / DSM 43247 / BCRC 13721 / JCM 3198 / KCTC 3076 / NBRC 16047 / NCTC 10667) (Rhodococcus bronchialis).